The primary structure comprises 195 residues: dTTP/UTP pyrophosphatase (195 aa).

Residue D70 is the Proton acceptor of the active site.

It belongs to the Maf family. YhdE subfamily. The cofactor is a divalent metal cation.

It localises to the cytoplasm. The enzyme catalyses dTTP + H2O = dTMP + diphosphate + H(+). It catalyses the reaction UTP + H2O = UMP + diphosphate + H(+). In terms of biological role, nucleoside triphosphate pyrophosphatase that hydrolyzes dTTP and UTP. May have a dual role in cell division arrest and in preventing the incorporation of modified nucleotides into cellular nucleic acids. This chain is dTTP/UTP pyrophosphatase, found in Photorhabdus laumondii subsp. laumondii (strain DSM 15139 / CIP 105565 / TT01) (Photorhabdus luminescens subsp. laumondii).